We begin with the raw amino-acid sequence, 96 residues long: Small ribosomal subunit protein bS18 (96 aa).

The segment covering 1-22 (MYKDVDSHQRDSRSDGHQDGFK) has biased composition (basic and acidic residues). The segment at 1-25 (MYKDVDSHQRDSRSDGHQDGFKKNP) is disordered.

Belongs to the bacterial ribosomal protein bS18 family. As to quaternary structure, part of the 30S ribosomal subunit. Forms a tight heterodimer with protein bS6.

Binds as a heterodimer with protein bS6 to the central domain of the 16S rRNA, where it helps stabilize the platform of the 30S subunit. The chain is Small ribosomal subunit protein bS18 from Borrelia hermsii (strain HS1 / DAH).